The chain runs to 351 residues: Penicillolysin (351 aa).

A signal peptide spans 1–19 (MRFTTLSTAFLALAQNVYA). Residues 20–174 (FPIESDLSAL…TKALKPLDRR (155 aa)) constitute a propeptide that is removed on maturation. N52 and N181 each carry an N-linked (GlcNAc...) asparagine glycan. Position 302 (H302) interacts with Zn(2+). E303 is an active-site residue. Zn(2+)-binding residues include H306 and D317.

The protein belongs to the peptidase M35 family. It depends on Zn(2+) as a cofactor.

It carries out the reaction Preferential cleavage of bonds with hydrophobic residues in P1'. Also 3-Asn-|-Gln-4 and 8-Gly-|-Ser-9 bonds in insulin B chain.. This Penicillium citrinum protein is Penicillolysin (plnC).